The primary structure comprises 363 residues: Phosphoserine aminotransferase (363 aa).

Arg-41 is a binding site for L-glutamate. Pyridoxal 5'-phosphate contacts are provided by residues 75–76 (AS), Trp-100, Thr-155, Asp-175, and Gln-198. Lys-199 is subject to N6-(pyridoxal phosphate)lysine. 239 to 240 (NT) is a binding site for pyridoxal 5'-phosphate.

It belongs to the class-V pyridoxal-phosphate-dependent aminotransferase family. SerC subfamily. In terms of assembly, homodimer. Pyridoxal 5'-phosphate is required as a cofactor.

The protein resides in the cytoplasm. It carries out the reaction O-phospho-L-serine + 2-oxoglutarate = 3-phosphooxypyruvate + L-glutamate. It catalyses the reaction 4-(phosphooxy)-L-threonine + 2-oxoglutarate = (R)-3-hydroxy-2-oxo-4-phosphooxybutanoate + L-glutamate. It functions in the pathway amino-acid biosynthesis; L-serine biosynthesis; L-serine from 3-phospho-D-glycerate: step 2/3. Catalyzes the reversible conversion of 3-phosphohydroxypyruvate to phosphoserine and of 3-hydroxy-2-oxo-4-phosphonooxybutanoate to phosphohydroxythreonine. In Streptococcus suis (strain 98HAH33), this protein is Phosphoserine aminotransferase.